The sequence spans 514 residues: Phospholipase C D (514 aa).

The segment at residues 1-37 (MSQSHIGGVSRREFLAKVAAGGAGALMSFAGPVIEKA) is a signal peptide (tat-type signal). The interval 492–514 (VPDPQIMPTQETTPTRGIPSGPC) is disordered.

It belongs to the bacterial phospholipase C family. In terms of processing, predicted to be exported by the Tat system. The position of the signal peptide cleavage has not been experimentally proven.

The protein resides in the secreted. Its subcellular location is the cell wall. It carries out the reaction a 1,2-diacyl-sn-glycero-3-phosphocholine + H2O = phosphocholine + a 1,2-diacyl-sn-glycerol + H(+). Its function is as follows. Involved in virulence. Induces cytotoxic effects on mouse macrophage cell lines, via direct or indirect enzymatic hydrolysis of cell membrane phospholipids. Hydrolyzes phosphatidylcholine. The chain is Phospholipase C D from Mycobacterium tuberculosis (strain CDC 1551 / Oshkosh).